A 362-amino-acid chain; its full sequence is Peptide chain release factor 1 (362 aa).

Q237 carries the post-translational modification N5-methylglutamine.

This sequence belongs to the prokaryotic/mitochondrial release factor family. Methylated by PrmC. Methylation increases the termination efficiency of RF1.

The protein localises to the cytoplasm. Its function is as follows. Peptide chain release factor 1 directs the termination of translation in response to the peptide chain termination codons UAG and UAA. This Legionella pneumophila (strain Paris) protein is Peptide chain release factor 1.